The sequence spans 534 residues: Peptide chain release factor 3 (534 aa).

Positions 9–278 (ARRRTFAIIS…FFVEHAPSPQ (270 aa)) constitute a tr-type G domain. GTP is bound by residues 18–25 (SHPDAGKT), 86–90 (DTPGH), and 140–143 (NKLD).

Belongs to the TRAFAC class translation factor GTPase superfamily. Classic translation factor GTPase family. PrfC subfamily.

Its subcellular location is the cytoplasm. Its function is as follows. Increases the formation of ribosomal termination complexes and stimulates activities of RF-1 and RF-2. It binds guanine nucleotides and has strong preference for UGA stop codons. It may interact directly with the ribosome. The stimulation of RF-1 and RF-2 is significantly reduced by GTP and GDP, but not by GMP. The protein is Peptide chain release factor 3 of Xylella fastidiosa (strain M12).